The sequence spans 344 residues: Cinnamoyl-CoA reductase 1 (344 aa).

Ser7 is subject to Phosphoserine. Residues 17 to 23, Arg42, Lys48, 68 to 69, 88 to 90, Tyr161, Lys165, 188 to 191, and Ser203 contribute to the NADP(+) site; these read GAGGYIA, DL, TAS, and PVLV. A disulfide bridge connects residues Cys154 and Cys162. The active-site Proton donor is Lys165. The interval 317-344 is disordered; that stretch reads QEKGHLAPPPPPPSASQESVENGIKIGS.

Belongs to the NAD(P)-dependent epimerase/dehydratase family. Dihydroflavonol-4-reductase subfamily. In terms of tissue distribution, expressed in leaves, stems and flowers.

It carries out the reaction (E)-cinnamaldehyde + NADP(+) + CoA = (E)-cinnamoyl-CoA + NADPH + H(+). It participates in aromatic compound metabolism; phenylpropanoid biosynthesis. Its function is as follows. Involved in the latter stages of lignin biosynthesis. Catalyzes one of the last steps of monolignol biosynthesis, the conversion of cinnamoyl-CoAs into their corresponding cinnamaldehydes. The protein is Cinnamoyl-CoA reductase 1 of Arabidopsis thaliana (Mouse-ear cress).